Reading from the N-terminus, the 185-residue chain is MINDIKKDAEARMKKTVEALGINFNKIRTGRAHPSILDGVSVSYYGSDTPLSQVANISVLDARTLSLSPWEKSMVPEIEKAIMKSDLGLNPVTTGELIRVPMPALTEESRKGYIKQAKTEAEQARVSIRNVRRDVLADVKELLKEKEISEDDDRRAQDDIQKITDKYVAEVDAALAVKEKDLMEI.

It belongs to the RRF family.

Its subcellular location is the cytoplasm. In terms of biological role, responsible for the release of ribosomes from messenger RNA at the termination of protein biosynthesis. May increase the efficiency of translation by recycling ribosomes from one round of translation to another. The protein is Ribosome-recycling factor of Teredinibacter turnerae (strain ATCC 39867 / T7901).